The sequence spans 246 residues: UDP-2,3-diacylglucosamine hydrolase (246 aa).

Mn(2+) contacts are provided by aspartate 8, histidine 10, aspartate 41, asparagine 79, and histidine 114. 79-80 (NR) is a substrate binding site. Residues aspartate 122, serine 160, asparagine 164, lysine 167, and histidine 195 each contribute to the substrate site. Positions 195 and 197 each coordinate Mn(2+).

It belongs to the LpxH family. Mn(2+) is required as a cofactor.

The protein resides in the cell inner membrane. It catalyses the reaction UDP-2-N,3-O-bis[(3R)-3-hydroxytetradecanoyl]-alpha-D-glucosamine + H2O = 2-N,3-O-bis[(3R)-3-hydroxytetradecanoyl]-alpha-D-glucosaminyl 1-phosphate + UMP + 2 H(+). It functions in the pathway glycolipid biosynthesis; lipid IV(A) biosynthesis; lipid IV(A) from (3R)-3-hydroxytetradecanoyl-[acyl-carrier-protein] and UDP-N-acetyl-alpha-D-glucosamine: step 4/6. Functionally, hydrolyzes the pyrophosphate bond of UDP-2,3-diacylglucosamine to yield 2,3-diacylglucosamine 1-phosphate (lipid X) and UMP by catalyzing the attack of water at the alpha-P atom. Involved in the biosynthesis of lipid A, a phosphorylated glycolipid that anchors the lipopolysaccharide to the outer membrane of the cell. The protein is UDP-2,3-diacylglucosamine hydrolase of Chromohalobacter salexigens (strain ATCC BAA-138 / DSM 3043 / CIP 106854 / NCIMB 13768 / 1H11).